We begin with the raw amino-acid sequence, 323 residues long: Probable oxidoreductase patJ (323 aa).

Positions 291–323 (DQSANGVNGHATGVEAKKKQLGDMTRRRSGAQE) are disordered. The span at 305-316 (EAKKKQLGDMTR) shows a compositional bias: basic and acidic residues.

It belongs to the oxidoreductase OpS7 family.

The protein resides in the vacuole lumen. It localises to the cytoplasmic vesicle lumen. It participates in mycotoxin biosynthesis; patulin biosynthesis. Its function is as follows. Probable oxidoreductase; part of the gene cluster that mediates the biosynthesis of patulin, an acetate-derived tetraketide mycotoxin produced by several fungal species that shows antimicrobial properties against several bacteria. PatJ acts with patO in the vacuole to convert gentisyl alcohol to isoepoxydon. The pathway begins with the synthesis of 6-methylsalicylic acid by the polyketide synthase (PKS) patK via condensation of acetate and malonate units. The 6-methylsalicylic acid decarboxylase patG then catalyzes the decarboxylation of 6-methylsalicylic acid to yield m-cresol (also known as 3-methylphenol). These first reactions occur in the cytosol. The intermediate m-cresol is then transported into the endoplasmic reticulum where the cytochrome P450 monooxygenase patH converts it to m-hydroxybenzyl alcohol, which is further converted to gentisyl alcohol by the cytochrome P450 monooxygenase patI. The oxidoreductases patJ and patO further convert gentisyl alcohol to isoepoxydon in the vacuole. PatN catalyzes then the transformation of isoepoxydon into phyllostine. The cluster protein patF is responsible for the conversion from phyllostine to neopatulin whereas the alcohol dehydrogenase patD converts neopatulin to E-ascladiol. The steps between isoepoxydon and E-ascladiol occur in the cytosol, and E-ascladiol is probably secreted to the extracellular space by one of the cluster-specific transporters patC or patM. Finally, the secreted patulin synthase patE catalyzes the conversion of E-ascladiol to patulin. The protein is Probable oxidoreductase patJ of Aspergillus clavatus (strain ATCC 1007 / CBS 513.65 / DSM 816 / NCTC 3887 / NRRL 1 / QM 1276 / 107).